The primary structure comprises 129 residues: Short-chain dehydrogenase/reductase homolog YusR (129 aa).

This sequence belongs to the short-chain dehydrogenases/reductases (SDR) family.

This is Short-chain dehydrogenase/reductase homolog YusR (yusR) from Bacillus subtilis (strain 168).